Consider the following 456-residue polypeptide: Outer membrane protein assembly factor BamB (456 aa).

The N-terminal stretch at 1 to 19 is a signal peptide; it reads MKKLLFITAPLLLSVLTAS. A lipid anchor (N-palmitoyl cysteine) is attached at Cys-20. A lipid anchor (S-diacylglycerol cysteine) is attached at Cys-20.

The protein belongs to the BamB family. As to quaternary structure, part of the Bam complex.

It localises to the cell outer membrane. Part of the outer membrane protein assembly complex, which is involved in assembly and insertion of beta-barrel proteins into the outer membrane. The protein is Outer membrane protein assembly factor BamB of Francisella tularensis subsp. tularensis (strain SCHU S4 / Schu 4).